The chain runs to 418 residues: MSLLDCFCTSRTQVESLRPEKQSETSIHQYLVDEPTLSWSRPSTRASEVLCSTNVSHYELQVEIGRGFDNLTSVHLARHTPTGTLVTIKITNLENCNEERLKALQKAVILSHFFRHPNITTYWTVFTVGSWLWVISPFMAYGSASQLLRTYFPEGMSETLIRNILFGAVRGLNYLHQNGCIHRSIKASHILISGDGLVTLSGLSHLHSLVKHGQRHRAVYDFPQFSTSVQPWLSPELLRQDLHGYNVKSDIYSVGITACELASGQVPFQDMHRTQMLLQKLKGPPYSPLDISIFPQSESRMKNSQSGVDSGIGESVLVSSGTHTVNSDRLHTPSSKTFSPAFFSLVQLCLQQDPEKRPSASSLLSHVFFKQMKEESQDSILSLLPPAYNKPSISLPPVLPWTEPECDFPDEKDSYWEF.

The Protein kinase domain occupies 58–369; it reads YELQVEIGRG…ASSLLSHVFF (312 aa). ATP-binding positions include 64–72 and Lys-89; that span reads IGRGFDNLT.

Belongs to the protein kinase superfamily. STE Ser/Thr protein kinase family. STE20 subfamily. Component of a trimeric complex composed of STK11/LKB1, STRAD (STRADA or STRADB) and CAB39/MO25 (CAB39/MO25alpha or CAB39L/MO25beta): the complex tethers STK11/LKB1 in the cytoplasm and stimulates its catalytic activity. Interacts with BIRC4/XIAP. These two proteins are likely to coexist in a complex with TAK1, TRAF6, TAB1 and TAB2. In terms of tissue distribution, highly expressed in heart, skeletal muscle, testis, liver and colon.

The protein resides in the nucleus. The protein localises to the cytoplasm. Pseudokinase which, in complex with CAB39/MO25 (CAB39/MO25alpha or CAB39L/MO25beta), binds to and activates STK11/LKB1. Adopts a closed conformation typical of active protein kinases and binds STK11/LKB1 as a pseudosubstrate, promoting conformational change of STK11/LKB1 in an active conformation. This chain is STE20-related kinase adapter protein beta (STRADB), found in Homo sapiens (Human).